We begin with the raw amino-acid sequence, 105 residues long: uncharacterized protein (105 aa).

This is an uncharacterized protein from Microplitis demolitor (Parasitoid wasp).